A 103-amino-acid chain; its full sequence is Large ribosomal subunit protein uL24 (103 aa).

The disordered stretch occupies residues 70–103 (YLDPSTNEPTRLGVRREDGKRVRYAKKSGKDLEN).

This sequence belongs to the universal ribosomal protein uL24 family. Part of the 50S ribosomal subunit.

Functionally, one of two assembly initiator proteins, it binds directly to the 5'-end of the 23S rRNA, where it nucleates assembly of the 50S subunit. One of the proteins that surrounds the polypeptide exit tunnel on the outside of the subunit. The polypeptide is Large ribosomal subunit protein uL24 (Lactiplantibacillus plantarum (strain ATCC BAA-793 / NCIMB 8826 / WCFS1) (Lactobacillus plantarum)).